The sequence spans 176 residues: Protein GrpE (176 aa).

It belongs to the GrpE family. Homodimer.

Its subcellular location is the cytoplasm. Functionally, participates actively in the response to hyperosmotic and heat shock by preventing the aggregation of stress-denatured proteins, in association with DnaK and GrpE. It is the nucleotide exchange factor for DnaK and may function as a thermosensor. Unfolded proteins bind initially to DnaJ; upon interaction with the DnaJ-bound protein, DnaK hydrolyzes its bound ATP, resulting in the formation of a stable complex. GrpE releases ADP from DnaK; ATP binding to DnaK triggers the release of the substrate protein, thus completing the reaction cycle. Several rounds of ATP-dependent interactions between DnaJ, DnaK and GrpE are required for fully efficient folding. The polypeptide is Protein GrpE (Thermoplasma volcanium (strain ATCC 51530 / DSM 4299 / JCM 9571 / NBRC 15438 / GSS1)).